The following is a 183-amino-acid chain: Large ribosomal subunit protein uL6 (183 aa).

It belongs to the universal ribosomal protein uL6 family. In terms of assembly, part of the 50S ribosomal subunit.

Its function is as follows. This protein binds to the 23S rRNA, and is important in its secondary structure. It is located near the subunit interface in the base of the L7/L12 stalk, and near the tRNA binding site of the peptidyltransferase center. In Chlamydia trachomatis serovar L2 (strain ATCC VR-902B / DSM 19102 / 434/Bu), this protein is Large ribosomal subunit protein uL6.